Consider the following 319-residue polypeptide: MSSPQAPEDGQGCGDRGDPPGDLRSVLVTTVLNLEPLDEDLFRGRHYWVPAKRLFGGQIVGQALVAAAKSVSEDVHVHSLHCYFVRAGDPKLPVLYQVERTRTGSSFSVRSVKAVQHGKPIFICQASFQQAQPSPMQHQFSMPTVPPPEELLDCETLIDQYLRDPNLQKRYPLALNRIAAQEVPIEIKPVNPSPLSQLQRMEPKQMFWVRARGYIGEGDMKMHCCVAAYISDYAFLGTALLPHQWQHKVHFMVSLDHSMWFHAPFRADHWMLYECESPWAGGSRGLVHGRLWRQDGVLAVTCAQEGVIRVKPQVSESKL.

Residues 1–20 (MSSPQAPEDGQGCGDRGDPP) are disordered. Active-site charge relay system residues include aspartate 232, serine 254, and glutamine 304. Residues 317–319 (SKL) carry the Microbody targeting signal motif.

It belongs to the C/M/P thioester hydrolase family. As to quaternary structure, homodimer. In terms of assembly, (Microbial infection) Interacts with human immunodeficiency virus (HIV-1) Nef (via middle region); this interaction enhances ACOT8 Acyl-CoA thioesterase activity and occurs in a Nef myristoylation-independent manner. According to a second report, the interaction with HIV-1 Nef occurs in a Nef myristoylation-independent manner but does not enhance ACOT8 Acyl-CoA thioesterase activity. Detected in a T-cell line (at protein level). Ubiquitous.

The protein localises to the peroxisome matrix. It carries out the reaction choloyl-CoA + H2O = cholate + CoA + H(+). It catalyses the reaction chenodeoxycholoyl-CoA + H2O = chenodeoxycholate + CoA + H(+). The enzyme catalyses acetyl-CoA + H2O = acetate + CoA + H(+). The catalysed reaction is butanoyl-CoA + H2O = butanoate + CoA + H(+). It carries out the reaction 2-methylpropanoyl-CoA + H2O = 2-methylpropanoate + CoA + H(+). It catalyses the reaction hexanoyl-CoA + H2O = hexanoate + CoA + H(+). The enzyme catalyses octanoyl-CoA + H2O = octanoate + CoA + H(+). The catalysed reaction is decanoyl-CoA + H2O = decanoate + CoA + H(+). It carries out the reaction dodecanoyl-CoA + H2O = dodecanoate + CoA + H(+). It catalyses the reaction tetradecanoyl-CoA + H2O = tetradecanoate + CoA + H(+). The enzyme catalyses hexadecanoyl-CoA + H2O = hexadecanoate + CoA + H(+). The catalysed reaction is octadecanoyl-CoA + H2O = octadecanoate + CoA + H(+). It carries out the reaction malonyl-CoA + H2O = malonate + CoA + H(+). It catalyses the reaction acetoacetyl-CoA + H2O = acetoacetate + CoA + H(+). The enzyme catalyses propanoyl-CoA + H2O = propanoate + CoA + H(+). The catalysed reaction is succinyl-CoA + H2O = succinate + CoA + H(+). It carries out the reaction glutaryl-CoA + H2O = glutarate + CoA + H(+). It catalyses the reaction hexanedioyl-CoA + H2O = hexanedioate + CoA + H(+). The enzyme catalyses octanedioyl-CoA + H2O = octanedioate + CoA + H(+). The catalysed reaction is decanedioyl-CoA + H2O = decanedioate + CoA + H(+). It carries out the reaction dodecanedioyl-CoA + H2O = dodecanedioate + CoA + H(+). It catalyses the reaction (9Z)-tetradecenoyl-CoA + H2O = (9Z)-tetradecenoate + CoA + H(+). The enzyme catalyses (9Z)-hexadecenoyl-CoA + H2O = (9Z)-hexadecenoate + CoA + H(+). The catalysed reaction is (9Z)-octadecenoyl-CoA + H2O = (9Z)-octadecenoate + CoA + H(+). It carries out the reaction (9Z,12Z)-octadecadienoyl-CoA + H2O = (9Z,12Z)-octadecadienoate + CoA + H(+). It catalyses the reaction eicosanoyl-CoA + H2O = eicosanoate + CoA + H(+). The enzyme catalyses (5Z,8Z,11Z,14Z)-eicosatetraenoyl-CoA + H2O = (5Z,8Z,11Z,14Z)-eicosatetraenoate + CoA + H(+). The catalysed reaction is 4,8-dimethylnonanoyl-CoA + H2O = 4,8-dimethylnonanoate + CoA + H(+). It carries out the reaction 2,6-dimethylheptanoyl-CoA + H2O = 2,6-dimethylheptanoate + CoA + H(+). It catalyses the reaction (3S)-3-hydroxy-3-methylglutaryl-CoA + H2O = 3-hydroxy-3-methylglutarate + CoA + H(+). The enzyme catalyses 3alpha,7alpha,12alpha-trihydroxy-5beta-cholestan-26-oyl-CoA + H2O = 3alpha,7alpha,12alpha-trihydroxy-5beta-cholestan-26-oate + CoA + H(+). The catalysed reaction is 2-methyloctadecanoyl-CoA + H2O = 2-methyloctadecanoate + CoA + H(+). It carries out the reaction prostaglandin F2alpha-CoA + H2O = prostaglandin F2alpha + CoA + H(+). Its pathway is lipid metabolism; fatty acid metabolism. Its activity is regulated as follows. Inhibited by CoASH (IC(50)=10-15 uM). Also inhibited by cysteine-reactive agents. Its function is as follows. Catalyzes the hydrolysis of acyl-CoAs into free fatty acids and coenzyme A (CoASH), regulating their respective intracellular levels. Displays no strong substrate specificity with respect to the carboxylic acid moiety of Acyl-CoAs. Hydrolyzes medium length (C2 to C20) straight-chain, saturated and unsaturated acyl-CoAS but is inactive towards substrates with longer aliphatic chains. Moreover, it catalyzes the hydrolysis of CoA esters of bile acids, such as choloyl-CoA and chenodeoxycholoyl-CoA and competes with bile acid CoA:amino acid N-acyltransferase (BAAT). Is also able to hydrolyze CoA esters of dicarboxylic acids. It is involved in the metabolic regulation of peroxisome proliferation. In terms of biological role, (Microbial infection) May mediate Nef-induced down-regulation of CD4 cell-surface expression. The chain is Acyl-coenzyme A thioesterase 8 (ACOT8) from Homo sapiens (Human).